We begin with the raw amino-acid sequence, 40 residues long: Photosystem II reaction center protein J (40 aa).

The chain crosses the membrane as a helical span at residues 8 to 28; that stretch reads IPLWLVALVAGTGVLVVVGLF.

The protein belongs to the PsbJ family. PSII is composed of 1 copy each of membrane proteins PsbA, PsbB, PsbC, PsbD, PsbE, PsbF, PsbH, PsbI, PsbJ, PsbK, PsbL, PsbM, PsbT, PsbX, PsbY, PsbZ, Psb30/Ycf12, peripheral proteins PsbO, CyanoQ (PsbQ), PsbU, PsbV and a large number of cofactors. It forms dimeric complexes.

The protein localises to the cellular thylakoid membrane. One of the components of the core complex of photosystem II (PSII). PSII is a light-driven water:plastoquinone oxidoreductase that uses light energy to abstract electrons from H(2)O, generating O(2) and a proton gradient subsequently used for ATP formation. It consists of a core antenna complex that captures photons, and an electron transfer chain that converts photonic excitation into a charge separation. In Trichodesmium erythraeum (strain IMS101), this protein is Photosystem II reaction center protein J.